The primary structure comprises 101 residues: Small ribosomal subunit protein bS18c (101 aa).

The segment covering 1 to 19 has biased composition (basic residues); sequence MNKSKRPFTKSKRSFRRRL. Positions 1-23 are disordered; that stretch reads MNKSKRPFTKSKRSFRRRLPPIQ.

Belongs to the bacterial ribosomal protein bS18 family. As to quaternary structure, part of the 30S ribosomal subunit.

The protein resides in the plastid. It is found in the chloroplast. This is Small ribosomal subunit protein bS18c from Draba nemorosa (Woodland whitlowgrass).